The sequence spans 703 residues: Arf-GAP with GTPase, ANK repeat and PH domain-containing protein 9 (703 aa).

Disordered regions lie at residues 249-287 (KRNG…TPTP), 299-323 (FTSE…TIGS), and 427-449 (SSTT…KHLK). Over residues 271–286 (QEDPQFSVPPTANTPT) the composition is skewed to polar residues. Basic and acidic residues predominate over residues 303 to 318 (KGSDPDKERKAPENHA). The PH domain maps to 327 to 488 (IPIKQGMLLK…WVQAIQSQIL (162 aa)). The Arf-GAP domain occupies 509 to 629 (AMALQSIQNM…LFLAPLPCTE (121 aa)). The segment at 524–547 (CVDCETQNPKWASLNLGVLMCIEC) adopts a C4-type zinc-finger fold. The stretch at 631 to 700 (SLGQQLLRAT…WTSWPEMPTG (70 aa)) is one ANK repeat.

Belongs to the centaurin gamma-like family.

Its function is as follows. Putative GTPase-activating protein. The sequence is that of Arf-GAP with GTPase, ANK repeat and PH domain-containing protein 9 (AGAP9) from Homo sapiens (Human).